The following is a 148-amino-acid chain: Large ribosomal subunit protein bL9 (148 aa).

It belongs to the bacterial ribosomal protein bL9 family.

Binds to the 23S rRNA. The chain is Large ribosomal subunit protein bL9 from Oceanobacillus iheyensis (strain DSM 14371 / CIP 107618 / JCM 11309 / KCTC 3954 / HTE831).